Here is a 319-residue protein sequence, read N- to C-terminus: Olfactory receptor 10Q1 (319 aa).

Residues 1-29 lie on the Extracellular side of the membrane; that stretch reads MPVGKLVFNQSEPTEFVFRAFTTATEFQV. Asn-9 is a glycosylation site (N-linked (GlcNAc...) asparagine). The helical transmembrane segment at 30–50 threads the bilayer; it reads LLFLLFLLLYLMILCGNTAII. At 51 to 58 the chain is on the cytoplasmic side; that stretch reads WVVCTHST. Residues 59 to 79 traverse the membrane as a helical segment; it reads LRTPMYFFLSNLSFLELCYTT. Over 80–103 the chain is Extracellular; it reads VVVPLMLSNILGAQKPISLAGCGA. Cys-101 and Cys-194 are joined by a disulfide. A helical transmembrane segment spans residues 104-124; sequence QMFFFVTLGSTDCFLLAIMAY. Over 125–143 the chain is Cytoplasmic; the sequence is DRYVAICHPLHYTLIMTRE. Residues 144-164 form a helical membrane-spanning segment; sequence LCTQMLGGALGLALFPSLQLT. Over 165–202 the chain is Extracellular; it reads ALIFTLPFCGHHQEINHFLCDVPPVLRLACADIRVHQA. A helical transmembrane segment spans residues 203–222; sequence VLYVVSILVLTIPFLLICVS. Residues 223-242 are Cytoplasmic-facing; it reads YVFITCAILSIRSAEGRRRA. A helical membrane pass occupies residues 243–263; it reads FSTCSFHLTVVLLQYGCCSLV. Residues 264 to 276 lie on the Extracellular side of the membrane; it reads YLRPRSSTSEDED. The helical transmembrane segment at 277-297 threads the bilayer; that stretch reads SQIALVYTFVTPLLNPLLYSL. The Cytoplasmic segment spans residues 298–319; sequence RNKDVKGALRSAIIRKAASDAN.

It belongs to the G-protein coupled receptor 1 family.

It is found in the cell membrane. In terms of biological role, odorant receptor. This Homo sapiens (Human) protein is Olfactory receptor 10Q1 (OR10Q1).